We begin with the raw amino-acid sequence, 269 residues long: MRLSVSLLALAFGSLVAAAPNTKPRTCGSKPSMEFLAKSAEFAAKEASGELLNSLATIEVETYFHVVASGRTPSQGYLSDAMLANQLRVMNSDYGPHGIQFNLVRTTRTVNANWARDGDELGMKRALRQGGYNALNVYFLGDLGSLLGYCYFPTNASPGSTAFIRDGCVVVGQSVPGGNISNYNLGKTATHEVGHWFGGCFGSGDGVSDTPPQRSSTQGCPSSRDSCPGGGVDPIHNYMDYSYDVCMNQFTSGQRTRIYNMWNQYRARG.

Residues 1 to 18 (MRLSVSLLALAFGSLVAA) form the signal peptide. An N-linked (GlcNAc...) asparagine glycan is attached at Asn179. His191 is a binding site for Zn(2+). Glu192 is a catalytic residue. Residue His195 coordinates Zn(2+). Positions 207 to 227 (VSDTPPQRSSTQGCPSSRDSC) are disordered. The segment covering 210 to 225 (TPPQRSSTQGCPSSRD) has biased composition (polar residues). A disulfide bridge links Cys220 with Cys246.

It belongs to the peptidase M43B family.

It is found in the secreted. Secreted metalloproteinase that allows assimilation of proteinaceous substrates. The chain is Extracellular metalloprotease UREG_07765 from Uncinocarpus reesii (strain UAMH 1704).